The following is a 309-amino-acid chain: Probable manganese-dependent inorganic pyrophosphatase (309 aa).

Residues H9, D13, D15, D75, H97, and D149 each coordinate Mn(2+).

The protein belongs to the PPase class C family. It depends on Mn(2+) as a cofactor.

The protein resides in the cytoplasm. The enzyme catalyses diphosphate + H2O = 2 phosphate + H(+). This chain is Probable manganese-dependent inorganic pyrophosphatase, found in Bacillus cereus (strain B4264).